The chain runs to 507 residues: MRTKYFSLLVFIIVLASNEVIAKKHSSTPKLRRSDFPKDFIFGAATSAYQVEGAAHEDGRGPSIWDTFSEKYPEKIKDGTNGSIASDSYHLYKEDVGLLHQIGFGAYRFSISWSRILPRGNLKGGINQAGIDYYNNLINELLSKGIKPFATIFHWDTPQSLEDAYGGFFGAEIVNDFRDYADICFKNFGDRVKHWMTLNEPLTVVQQGYVAGVMAPGRCSKFTNPNCTAGNGATEPYIVGHNLILAHGEAVKVYREKYKASQKGQVGIALNAGWNLPYTESAEDRLAAARAMAFTFDYFMEPLVTGKYPVDMVNNVKDGRLPTFTAKQSKMLKGSYDFIGINYYSSSYAKDVPCSSENVTLFSDPCASVTGEREGVPIGPKAASDWLLIYPKGIRDLLLYAKYKFKDPVMYITENGRDEASTGKIDLKDSERIDYYAQHLKMVQDAISIGANVKGFFAWSLLDNFEWATGYSVRFGLVYVDFNDGRKRYPKKSAKWFRKLLSEKKRN.

Positions 1–22 are cleaved as a signal peptide; it reads MRTKYFSLLVFIIVLASNEVIA. A beta-D-glucoside is bound at residue Gln-50. N-linked (GlcNAc...) asparagine glycosylation occurs at Asn-81. Residues His-154 and 199–200 each bind a beta-D-glucoside; that span reads NE. Glu-200 (proton donor) is an active-site residue. Cys-219 and Cys-227 are disulfide-bonded. The N-linked (GlcNAc...) asparagine glycan is linked to Asn-226. Tyr-344 contacts a beta-D-glucoside. Asn-358 carries N-linked (GlcNAc...) asparagine glycosylation. A beta-D-glucoside is bound by residues Glu-414, Trp-459, 466–467, and Phe-475; that span reads EW. Catalysis depends on Glu-414, which acts as the Nucleophile.

This sequence belongs to the glycosyl hydrolase 1 family.

It catalyses the reaction Hydrolysis of terminal, non-reducing beta-D-glucosyl residues with release of beta-D-glucose.. The protein is Beta-glucosidase 13 of Arabidopsis thaliana (Mouse-ear cress).